We begin with the raw amino-acid sequence, 165 residues long: Histone H1 (165 aa).

Positions 1–165 (GKQSTSKSVT…KKATKGSKKN (165 aa)) are disordered. Over residues 9–18 (VTREKKDVKK) the composition is skewed to basic and acidic residues. Basic residues predominate over residues 20–31 (VAPKKAIKKVTK). The segment covering 32–41 (KSTTPVKTSK) has biased composition (low complexity). A phosphothreonine mark is found at Thr48 and Thr54. The span at 68–89 (TMKESVSDAKKTVHKSAGDKKL) shows a compositional bias: basic and acidic residues. At Ser83 the chain carries Phosphoserine. Residues 103–117 (KIVHPAKKAAAKPKT) are compositionally biased toward basic residues. Thr117 carries the post-translational modification Phosphothreonine. Basic and acidic residues predominate over residues 118 to 157 (AKKEVKKDTKPVKKDAKKDTKPVKKDAKKDTKPAKKDTKK).

Post-translationally, cell-growth/division-associated phosphorylation by a CDC2-like kinase. Is additionally phosphorylated on either Ser-33, Thr-34 or Thr-35, and on either Thr-39 or Ser-40.

Its subcellular location is the nucleus. The protein resides in the chromosome. Its function is as follows. Histones H1 are necessary for the condensation of nucleosome chains into higher-order structures. This chain is Histone H1 (HHO), found in Tetrahymena pyriformis.